Reading from the N-terminus, the 483-residue chain is UDP-N-acetylmuramyl-tripeptide synthetase (483 aa).

Ser43 is a UDP-N-acetyl-alpha-D-muramoyl-L-alanyl-D-glutamate binding site. 116–122 (GTKGKTT) contacts ATP. Residues 160-161 (TT), Ser187, and Arg195 contribute to the UDP-N-acetyl-alpha-D-muramoyl-L-alanyl-D-glutamate site. The residue at position 229 (Lys229) is an N6-carboxylysine.

It belongs to the MurCDEF family. MurE subfamily. In terms of processing, carboxylation is probably crucial for Mg(2+) binding and, consequently, for the gamma-phosphate positioning of ATP.

The protein resides in the cytoplasm. It functions in the pathway cell wall biogenesis; peptidoglycan biosynthesis. Functionally, catalyzes the addition of an amino acid to the nucleotide precursor UDP-N-acetylmuramoyl-L-alanyl-D-glutamate (UMAG) in the biosynthesis of bacterial cell-wall peptidoglycan. The protein is UDP-N-acetylmuramyl-tripeptide synthetase of Lactococcus lactis subsp. cremoris (strain SK11).